Reading from the N-terminus, the 341-residue chain is Krueppel-like factor 17 (341 aa).

The disordered stretch occupies residues 214-252 (VTESNTQEEPFVREPPTPAPEGAESPSTSRGATRRQSPV). Residues 238-252 (SPSTSRGATRRQSPV) show a composition bias toward polar residues. 3 consecutive C2H2-type zinc fingers follow at residues 256–280 (YVCT…QRKH), 286–310 (FACD…KRIH), and 316–338 (HKCD…KRTH).

The protein belongs to the Sp1 C2H2-type zinc-finger protein family. Exclusively expressed in testis and ovary. Localized to step 3-8 spermatids in testis and growing oocytes in ovary.

It localises to the nucleus. Transcription repressor that binds to the promoter of target genes and prevents their expression. Acts as a negative regulator of epithelial-mesenchymal transition and metastasis in breast cancer. Specifically binds the 5'-CACCC-3' sequence in the promoter of ID1, a key metastasis regulator in breast cancer, and repress its expression. May be a germ cell-specific transcription factor that plays important roles in spermatid differentiation and oocyte development. In Mus musculus (Mouse), this protein is Krueppel-like factor 17 (Klf17).